The primary structure comprises 275 residues: Erythroagglutinating phytohemagglutinin (275 aa).

The signal sequence occupies residues 1 to 21 (MASSNLLSLALFLVLLTHANS). N33 is a glycosylation site (N-linked (GlcNAc...) (high mannose) asparagine). N-linked (GlcNAc...) asparagine glycosylation is found at N81 and N101.

This sequence belongs to the leguminous lectin family.

Functionally, this insecticidal carbohydrate-binding lectin is toxic for the cowpea weevil. This is Erythroagglutinating phytohemagglutinin (DLEC1) from Phaseolus vulgaris (Kidney bean).